A 285-amino-acid chain; its full sequence is RNA polymerase sigma factor RpoH (285 aa).

The segment at 53 to 122 is sigma-70 factor domain-2; the sequence is LILSHLRFVV…IHEYVLRNWR (70 aa). An Interaction with polymerase core subunit RpoC motif is present at residues 77–80; it reads DLIQ. Residues 229–281 are sigma-70 factor domain-4; the sequence is AMEGLDERSQDIIRARWLDEDNKSTLQELADRYGVSAERVRQLEKNAMKKLRA. The H-T-H motif DNA-binding region spans 254–273; sequence LQELADRYGVSAERVRQLEK.

It belongs to the sigma-70 factor family. RpoH subfamily. As to quaternary structure, interacts with the RNA polymerase core enzyme.

It localises to the cytoplasm. Sigma factors are initiation factors that promote the attachment of RNA polymerase to specific initiation sites and are then released. This sigma factor is involved in regulation of expression of heat shock genes. The sequence is that of RNA polymerase sigma factor RpoH from Enterobacter cloacae.